The following is a 563-amino-acid chain: Arginine--tRNA ligase (563 aa).

Residues Pro-120–His-130 carry the 'HIGH' region motif.

Belongs to the class-I aminoacyl-tRNA synthetase family. Monomer.

Its subcellular location is the cytoplasm. The catalysed reaction is tRNA(Arg) + L-arginine + ATP = L-arginyl-tRNA(Arg) + AMP + diphosphate. This is Arginine--tRNA ligase from Clostridium botulinum (strain 657 / Type Ba4).